Reading from the N-terminus, the 189-residue chain is uncharacterized protein (189 aa).

The next 4 membrane-spanning stretches (helical) occupy residues 35-55 (IIWY…AVMK), 97-117 (GVLQ…ALHF), 123-143 (WLLF…YEWT), and 144-164 (GNLF…ACQI).

The protein localises to the cell membrane. This is an uncharacterized protein from Bacillus subtilis (strain 168).